A 170-amino-acid chain; its full sequence is Probable chemoreceptor glutamine deamidase CheD 3 (170 aa).

This sequence belongs to the CheD family.

It carries out the reaction L-glutaminyl-[protein] + H2O = L-glutamyl-[protein] + NH4(+). Its function is as follows. Probably deamidates glutamine residues to glutamate on methyl-accepting chemotaxis receptors (MCPs), playing an important role in chemotaxis. This Dechloromonas aromatica (strain RCB) protein is Probable chemoreceptor glutamine deamidase CheD 3.